The primary structure comprises 115 residues: Large ribosomal subunit protein P2 (115 aa).

Position 1 is an N-acetylmethionine (M1). Phosphoserine occurs at positions 17 and 19. K21 is modified (N6-acetyllysine; alternate). Position 21 is an N6-succinyllysine; alternate (K21). Residues 76 to 90 (APGSAAPAAGSAPAA) are compositionally biased toward low complexity. A disordered region spans residues 76 to 115 (APGSAAPAAGSAPAAAEEKKDEKKEESEESDDDMGFGLFD). A phosphoserine mark is found at S79 and S86. Positions 91 to 101 (AEEKKDEKKEE) are enriched in basic and acidic residues. S102 and S105 each carry phosphoserine.

This sequence belongs to the eukaryotic ribosomal protein P1/P2 family. Heterodimer with RPLP1 at the lateral ribosomal stalk of the large ribosomal subunit.

In terms of biological role, plays an important role in the elongation step of protein synthesis. The sequence is that of Large ribosomal subunit protein P2 (Rplp2) from Mus musculus (Mouse).